The following is a 360-amino-acid chain: Phospho-N-acetylmuramoyl-pentapeptide-transferase (360 aa).

A run of 10 helical transmembrane segments spans residues 27–47, 72–92, 94–114, 135–155, 167–187, 199–219, 236–256, 263–283, 289–309, and 337–357; these read GAIATALFFVFFFGPNIIKSL, TPTMGGLMILSGLFVSTLLWA, LSNHYVWVVLWVMLGYGAIGF, LACEAGVALVACIAMMKLGTP, GYVVDLGLFFLIFGPFVIVAS, GLAIVPVMIAAGTFGIIAYLV, AGELAVVSGAVIGAGLGFLWF, IFMGDTGSLALGGLLGTIAVA, VLAIVGGLFALETLSVIVQVV, and QVVVRFWIIAFVLALVGLSTL.

The protein belongs to the glycosyltransferase 4 family. MraY subfamily. The cofactor is Mg(2+).

It localises to the cell inner membrane. It carries out the reaction UDP-N-acetyl-alpha-D-muramoyl-L-alanyl-gamma-D-glutamyl-meso-2,6-diaminopimeloyl-D-alanyl-D-alanine + di-trans,octa-cis-undecaprenyl phosphate = di-trans,octa-cis-undecaprenyl diphospho-N-acetyl-alpha-D-muramoyl-L-alanyl-D-glutamyl-meso-2,6-diaminopimeloyl-D-alanyl-D-alanine + UMP. The protein operates within cell wall biogenesis; peptidoglycan biosynthesis. Functionally, catalyzes the initial step of the lipid cycle reactions in the biosynthesis of the cell wall peptidoglycan: transfers peptidoglycan precursor phospho-MurNAc-pentapeptide from UDP-MurNAc-pentapeptide onto the lipid carrier undecaprenyl phosphate, yielding undecaprenyl-pyrophosphoryl-MurNAc-pentapeptide, known as lipid I. This is Phospho-N-acetylmuramoyl-pentapeptide-transferase from Beijerinckia indica subsp. indica (strain ATCC 9039 / DSM 1715 / NCIMB 8712).